The following is a 104-amino-acid chain: Large ribosomal subunit protein bL21 (104 aa).

A compositionally biased stretch (basic residues) spans 81–90; it reads QGYRRHHGHR. The interval 81 to 104 is disordered; the sequence is QGYRRHHGHRQPYTQVKITGISAG.

The protein belongs to the bacterial ribosomal protein bL21 family. Part of the 50S ribosomal subunit. Contacts protein L20.

Functionally, this protein binds to 23S rRNA in the presence of protein L20. This is Large ribosomal subunit protein bL21 from Halorhodospira halophila (strain DSM 244 / SL1) (Ectothiorhodospira halophila (strain DSM 244 / SL1)).